A 284-amino-acid polypeptide reads, in one-letter code: 2-dehydro-3-deoxyphosphooctonate aldolase (284 aa).

It belongs to the KdsA family.

It localises to the cytoplasm. The enzyme catalyses D-arabinose 5-phosphate + phosphoenolpyruvate + H2O = 3-deoxy-alpha-D-manno-2-octulosonate-8-phosphate + phosphate. Its pathway is carbohydrate biosynthesis; 3-deoxy-D-manno-octulosonate biosynthesis; 3-deoxy-D-manno-octulosonate from D-ribulose 5-phosphate: step 2/3. It functions in the pathway bacterial outer membrane biogenesis; lipopolysaccharide biosynthesis. The polypeptide is 2-dehydro-3-deoxyphosphooctonate aldolase (Burkholderia mallei (strain NCTC 10247)).